The following is a 468-amino-acid chain: Acetyl-CoA decarbonylase/synthase complex subunit gamma 2 (468 aa).

The 4Fe-4S domain occupies 1 to 60; sequence MKINSPLEAYKYLPQTNCGECGEATCMAFASKLIDRSGKPTQCPPLVKEKKFAKKLAELE. [4Fe-4S] cluster contacts are provided by cysteine 18, cysteine 21, cysteine 26, and cysteine 43.

Heterodimer of delta and gamma chains. The ACDS complex is made up of alpha, epsilon, beta, gamma and delta chains with a probable stoichiometry of (alpha(2)epsilon(2))(4)-beta(8)-(gamma(1)delta(1))(8). The cofactor is corrinoid. Requires [4Fe-4S] cluster as cofactor.

It catalyses the reaction 5,6,7,8-tetrahydrosarcinapterin + methyl-Co(III)-[corrinoid Fe-S protein] = 5-methyltetrahydrosarcinapterin + Co(I)-[corrinoid Fe-S protein] + H(+). It functions in the pathway one-carbon metabolism; methanogenesis from acetate. Part of a complex that catalyzes the reversible cleavage of acetyl-CoA, allowing growth on acetate as sole source of carbon and energy. In Methanosarcina thermophila, this protein is Acetyl-CoA decarbonylase/synthase complex subunit gamma 2.